We begin with the raw amino-acid sequence, 324 residues long: D-alanine--D-alanine ligase (324 aa).

Residues 121-321 (NQYLKGFGIR…IKDVMTDIIE (201 aa)) form the ATP-grasp domain. ATP is bound at residue 149-204 (INKIGLPCFIKPNAGGSSFGVTKVKTKEDIQPAIEKAFEESDEVMIEAFMKGTEIT). Mg(2+)-binding residues include aspartate 275, glutamate 288, and asparagine 290.

The protein belongs to the D-alanine--D-alanine ligase family. Requires Mg(2+) as cofactor. It depends on Mn(2+) as a cofactor.

Its subcellular location is the cytoplasm. The catalysed reaction is 2 D-alanine + ATP = D-alanyl-D-alanine + ADP + phosphate + H(+). The protein operates within cell wall biogenesis; peptidoglycan biosynthesis. In terms of biological role, cell wall formation. This chain is D-alanine--D-alanine ligase, found in Phocaeicola vulgatus (strain ATCC 8482 / DSM 1447 / JCM 5826 / CCUG 4940 / NBRC 14291 / NCTC 11154) (Bacteroides vulgatus).